Reading from the N-terminus, the 395-residue chain is uncharacterized protein (395 aa).

2 disordered regions span residues 17-155 and 276-304; these read EVKK…QVKT and EERE…HEQK. 2 stretches are compositionally biased toward polar residues: residues 42-71 and 81-96; these read DGNN…SNVV and GDAS…NVVK. The segment covering 103–133 has biased composition (basic and acidic residues); sequence VAEKPEKEDLAVIESEDKAAKPDGEIKKNVE. A compositionally biased stretch (low complexity) spans 134-143; that stretch reads TEVTSRSTSS. 2 stretches are compositionally biased toward basic and acidic residues: residues 144–155 and 276–290; these read QEKDELEKQVKT and EERE…KEQS. Residues 224 to 351 adopt a coiled-coil conformation; sequence LKMNGKEDDL…QRRLKELEAM (128 aa). A compositionally biased stretch (polar residues) spans 291 to 300; the sequence is SEGSKTANQT.

It localises to the cytoplasm. This is an uncharacterized protein from Schizosaccharomyces pombe (strain 972 / ATCC 24843) (Fission yeast).